The sequence spans 493 residues: Glutamyl-tRNA(Gln) amidotransferase subunit A (493 aa).

Residues Lys-78 and Ser-158 each act as charge relay system in the active site. Ser-182 serves as the catalytic Acyl-ester intermediate.

The protein belongs to the amidase family. GatA subfamily. Heterotrimer of A, B and C subunits.

The enzyme catalyses L-glutamyl-tRNA(Gln) + L-glutamine + ATP + H2O = L-glutaminyl-tRNA(Gln) + L-glutamate + ADP + phosphate + H(+). Functionally, allows the formation of correctly charged Gln-tRNA(Gln) through the transamidation of misacylated Glu-tRNA(Gln) in organisms which lack glutaminyl-tRNA synthetase. The reaction takes place in the presence of glutamine and ATP through an activated gamma-phospho-Glu-tRNA(Gln). This Methylocella silvestris (strain DSM 15510 / CIP 108128 / LMG 27833 / NCIMB 13906 / BL2) protein is Glutamyl-tRNA(Gln) amidotransferase subunit A.